A 165-amino-acid polypeptide reads, in one-letter code: Cystatin-like protein (165 aa).

A signal peptide spans 1–19 (MDVALKLLLLAALTLLASA). 2 disulfide bridges follow: C80–C92 and C104–C118.

In terms of biological role, involved in hypoxia tolerance. In Clarias batrachus (Walking catfish), this protein is Cystatin-like protein.